The chain runs to 190 residues: MYNPFHLHPGVEVYIDLGALPTMIEVLSVEVYGGFNAVAAPLEVCLDFLNGYRSRFPALYVCGNSSKALDGIRGNFRVRRGFTIHQLIEILLNAYQDMIFIEHDALLFEDCDFHTLEDFVMLLRQIGRDRTVVYFTTNRDRIFDFLTTLADRYILVEAEEGGYFIAEVDEKGINQRFYPKMVGQLTLEVF.

This is an uncharacterized protein from Archaeoglobus fulgidus (strain ATCC 49558 / DSM 4304 / JCM 9628 / NBRC 100126 / VC-16).